Reading from the N-terminus, the 509-residue chain is Activin receptor type-1 (509 aa).

Residues 1–20 form the signal peptide; the sequence is MVDGVMILPVLIMIALPSPS. Residues 21-123 lie on the Extracellular side of the membrane; the sequence is MEDEKPKVNP…FPGTQNFHLE (103 aa). Asn-102 carries an N-linked (GlcNAc...) asparagine glycan. The chain crosses the membrane as a helical span at residues 124–146; it reads VGLIILSVVFAVCLLACLLGVAL. Topologically, residues 147–509 are cytoplasmic; sequence RKFKRRNQER…NSLDKLKTDC (363 aa). Residues 178-207 form the GS domain; the sequence is STLADLLDHSCTSGSGSGLPFLVQRTVARQ. A Protein kinase domain is found at 208–502; that stretch reads ITLLECVGKG…KTLTKIDNSL (295 aa). ATP is bound by residues 214-222 and Lys-235; that span reads VGKGRYGEV. Asp-336 functions as the Proton acceptor in the catalytic mechanism. Ser-501 is subject to Phosphoserine.

Belongs to the protein kinase superfamily. TKL Ser/Thr protein kinase family. TGFB receptor subfamily. As to quaternary structure, interacts with FKBP1A. Interacts with FCHO1. Interacts with CLU. Interacts with type II receptors AMHR2 and ACVR2A. Interacts with BMP7. Interacts with GDF2/BMP9. Interacts with BMP6 (when glycosylated); the interaction may induce HAMP expression. Interacts with TSC22D1/TSC-22. Mg(2+) serves as cofactor. Mn(2+) is required as a cofactor. Expressed in normal parenchymal cells, endothelial cells, fibroblasts and tumor-derived epithelial cells.

The protein resides in the membrane. The enzyme catalyses L-threonyl-[receptor-protein] + ATP = O-phospho-L-threonyl-[receptor-protein] + ADP + H(+). It catalyses the reaction L-seryl-[receptor-protein] + ATP = O-phospho-L-seryl-[receptor-protein] + ADP + H(+). Bone morphogenetic protein (BMP) type I receptor that is involved in a wide variety of biological processes, including bone, heart, cartilage, nervous, and reproductive system development and regulation. As a type I receptor, forms heterotetrameric receptor complexes with the type II receptors AMHR2, ACVR2A or ACVR2B. Upon binding of ligands such as BMP7 or GDF2/BMP9 to the heteromeric complexes, type II receptors transphosphorylate ACVR1 intracellular domain. In turn, ACVR1 kinase domain is activated and subsequently phosphorylates SMAD1/5/8 proteins that transduce the signal. In addition to its role in mediating BMP pathway-specific signaling, suppresses TGFbeta/activin pathway signaling by interfering with the binding of activin to its type II receptor. Besides canonical SMAD signaling, can activate non-canonical pathways such as p38 mitogen-activated protein kinases/MAPKs. May promote the expression of HAMP, potentially via its interaction with BMP6. This is Activin receptor type-1 (ACVR1) from Homo sapiens (Human).